The sequence spans 420 residues: Coiled-coil domain-containing protein 85C (420 aa).

Alanine 2 carries the post-translational modification N-acetylalanine. Coiled-coil stretches lie at residues 26-92 (ELLR…RELC) and 122-165 (HEVA…LAAA). The interval 165-271 (AGGAGGGGGG…NGLHDPSSTY (107 aa)) is disordered. The span at 166-176 (GGAGGGGGGAG) shows a compositional bias: gly residues. Position 179 is a phosphoserine (serine 179). Over residues 185-212 (ASLSGPLAGSAAGSGARDVGDGSSTSSA) the composition is skewed to low complexity. Residue serine 247 is modified to Phosphoserine.

This sequence belongs to the CCDC85 family. In terms of assembly, may interact with ARVCF, CTNND1, CTNND2 and PKP4. As to expression, predominantly expressed on the surface of the lateral ventricular walls of the developing cerebral cortex.

It is found in the cell junction. Its subcellular location is the tight junction. It localises to the adherens junction. Functionally, may play a role in cell-cell adhesion and epithelium development through its interaction with proteins of the beta-catenin family. May play an important role in cortical development, especially in the maintenance of radial glia. This Mus musculus (Mouse) protein is Coiled-coil domain-containing protein 85C (Ccdc85c).